The chain runs to 200 residues: Small ribosomal subunit protein uS4c (200 aa).

Residues 90 to 150 (MRLDNIIFRL…NRKESVIIKN (61 aa)) enclose the S4 RNA-binding domain.

Belongs to the universal ribosomal protein uS4 family. In terms of assembly, part of the 30S ribosomal subunit. Contacts protein S5. The interaction surface between S4 and S5 is involved in control of translational fidelity.

The protein resides in the plastid. It is found in the chloroplast. Its function is as follows. One of the primary rRNA binding proteins, it binds directly to 16S rRNA where it nucleates assembly of the body of the 30S subunit. With S5 and S12 plays an important role in translational accuracy. The polypeptide is Small ribosomal subunit protein uS4c (rps4) (Pellia neesiana (Liverwort)).